We begin with the raw amino-acid sequence, 255 residues long: Urease accessory protein UreD 1 (255 aa).

It belongs to the UreD family. UreD, UreF and UreG form a complex that acts as a GTP-hydrolysis-dependent molecular chaperone, activating the urease apoprotein by helping to assemble the nickel containing metallocenter of UreC. The UreE protein probably delivers the nickel.

Its subcellular location is the cytoplasm. Its function is as follows. Required for maturation of urease via the functional incorporation of the urease nickel metallocenter. The chain is Urease accessory protein UreD 1 from Saccharopolyspora erythraea (strain ATCC 11635 / DSM 40517 / JCM 4748 / NBRC 13426 / NCIMB 8594 / NRRL 2338).